Reading from the N-terminus, the 317-residue chain is Transaldolase A (317 aa).

Lysine 132 serves as the catalytic Schiff-base intermediate with substrate.

It belongs to the transaldolase family. Type 1 subfamily. As to quaternary structure, homodimer.

It is found in the cytoplasm. It carries out the reaction D-sedoheptulose 7-phosphate + D-glyceraldehyde 3-phosphate = D-erythrose 4-phosphate + beta-D-fructose 6-phosphate. It functions in the pathway carbohydrate degradation; pentose phosphate pathway; D-glyceraldehyde 3-phosphate and beta-D-fructose 6-phosphate from D-ribose 5-phosphate and D-xylulose 5-phosphate (non-oxidative stage): step 2/3. Functionally, transaldolase is important for the balance of metabolites in the pentose-phosphate pathway. This chain is Transaldolase A (talA), found in Pasteurella multocida (strain Pm70).